We begin with the raw amino-acid sequence, 165 residues long: Protein SprT (165 aa).

A SprT-like domain is found at 20 to 163 (EKLAQANLKL…RCVHCGEQLV (144 aa)). H78 contacts Zn(2+). E79 is a catalytic residue. H82 provides a ligand contact to Zn(2+).

The protein belongs to the SprT family. Requires Zn(2+) as cofactor.

It localises to the cytoplasm. The polypeptide is Protein SprT (Shigella boydii serotype 18 (strain CDC 3083-94 / BS512)).